The primary structure comprises 270 residues: NAD kinase (270 aa).

The active-site Proton acceptor is the Asp45. Residues 45–46 (DG), 121–122 (NE), Arg147, Asp149, 160–165 (TAYSKS), and Ala184 contribute to the NAD(+) site.

The protein belongs to the NAD kinase family. The cofactor is a divalent metal cation.

It is found in the cytoplasm. It catalyses the reaction NAD(+) + ATP = ADP + NADP(+) + H(+). In terms of biological role, involved in the regulation of the intracellular balance of NAD and NADP, and is a key enzyme in the biosynthesis of NADP. Catalyzes specifically the phosphorylation on 2'-hydroxyl of the adenosine moiety of NAD to yield NADP. This is NAD kinase from Lactobacillus helveticus (strain DPC 4571).